A 1550-amino-acid chain; its full sequence is Protein TIME FOR COFFEE (1550 aa).

10 disordered regions span residues Met-1–Pro-191, Val-207–Val-304, Thr-325–Gly-505, Gln-708–Arg-736, Arg-779–Pro-805, Phe-859–Val-1023, Ala-1086–Ala-1130, Ala-1163–Pro-1196, Ala-1213–Ala-1296, and Asn-1321–Gly-1435. Over residues Glu-43–Asn-80 the composition is skewed to basic and acidic residues. Positions Asp-100–Asp-118 are enriched in acidic residues. Low complexity predominate over residues Ser-134–Asn-151. Basic residues predominate over residues Leu-157–Lys-171. A compositionally biased stretch (polar residues) spans Arg-241–Asn-250. The segment covering Lys-292–Pro-301 has biased composition (low complexity). Polar residues predominate over residues Arg-348 to Leu-366. The span at Ala-367 to Ala-379 shows a compositional bias: low complexity. Residues Ser-409–Leu-432 show a composition bias toward polar residues. 2 stretches are compositionally biased toward basic and acidic residues: residues Asp-447–Ile-461 and Ser-473–Ile-490. 3 stretches are compositionally biased toward polar residues: residues Gly-713–Arg-736, Ser-783–Ala-803, and Leu-884–Leu-992. Positions Ser-1112–Gly-1126 are enriched in gly residues. Positions Leu-1164 to Thr-1173 are enriched in polar residues. A compositionally biased stretch (low complexity) spans Ser-1174 to Gln-1195. The span at Asn-1234–Pro-1253 shows a compositional bias: polar residues. The span at Gln-1254–Ser-1273 shows a compositional bias: low complexity. Polar residues-rich tracts occupy residues Pro-1274–Ala-1296, Asn-1321–Ala-1342, and Ser-1351–Asn-1360. The segment covering Ala-1361 to Ser-1382 has biased composition (low complexity). Polar residues-rich tracts occupy residues Thr-1383 to Pro-1397 and Gly-1405 to Thr-1419. Low complexity predominate over residues Ser-1420–Gly-1435.

Interacts with MYC2.

It is found in the nucleus. Regulator of normal clock function. Acts in the mid to late night. Contributes to the amplitude of circadian clocks. May act on the transcriptional induction of LATE ELONGATED HYPOCOTYL (LHY). Inhibits MYC2 protein accumulation, acting as a negative factor in the JA-signaling pathway. The sequence is that of Protein TIME FOR COFFEE (TIC) from Arabidopsis thaliana (Mouse-ear cress).